We begin with the raw amino-acid sequence, 157 residues long: Probable succinate transporter subunit YjjB (157 aa).

The next 4 membrane-spanning stretches (helical) occupy residues 10–30 (LAQD…VFNV), 55–75 (AGFN…SIGI), 87–107 (IFTV…TAMI), and 129–149 (FLKA…PGLW).

It belongs to the ThrE exporter (TC 2.A.79) family. The transporter is composed of YjjB and YjjP.

The protein resides in the cell inner membrane. In terms of biological role, involved in succinate export with YjjP. Both proteins are required for export. Participates in succinate export, but also in the export of other dicarboxylates, such as fumarate and malate. Contributes to succinate production under both aerobic and anaerobic conditions, and increases fumarate and malate production during anaerobic succinate production. This Klebsiella aerogenes (strain ATCC 13048 / DSM 30053 / CCUG 1429 / JCM 1235 / KCTC 2190 / NBRC 13534 / NCIMB 10102 / NCTC 10006 / CDC 819-56) (Enterobacter aerogenes) protein is Probable succinate transporter subunit YjjB.